The sequence spans 622 residues: Threonine--tRNA ligase (622 aa).

The tract at residues 1-136 (MKTLLIHSDY…PLSELSRKIT (136 aa)) is editing domain. The interval 199–498 (PHVKYIKEKE…TLENKPPALP (300 aa)) is catalytic. The Zn(2+) site is built by Cys-291, His-343, and His-467.

It belongs to the class-II aminoacyl-tRNA synthetase family. As to quaternary structure, homodimer. Zn(2+) is required as a cofactor.

The protein localises to the cytoplasm. The enzyme catalyses tRNA(Thr) + L-threonine + ATP = L-threonyl-tRNA(Thr) + AMP + diphosphate + H(+). In terms of biological role, catalyzes the attachment of threonine to tRNA(Thr) in a two-step reaction: L-threonine is first activated by ATP to form Thr-AMP and then transferred to the acceptor end of tRNA(Thr). Also edits incorrectly charged L-seryl-tRNA(Thr). The chain is Threonine--tRNA ligase from Methanococcus maripaludis (strain DSM 14266 / JCM 13030 / NBRC 101832 / S2 / LL).